Reading from the N-terminus, the 179-residue chain is Large ribosomal subunit protein uL6c (179 aa).

The protein belongs to the universal ribosomal protein uL6 family. As to quaternary structure, part of the 50S ribosomal subunit.

It is found in the plastid. The protein localises to the chloroplast. Functionally, binds 23S rRNA. The protein is Large ribosomal subunit protein uL6c (rpl6) of Guillardia theta (Cryptophyte).